The following is a 203-amino-acid chain: MKKQVLRIGVGGPVGSGKTALLRQLCLSLRDKYNMAVVTNDIYTREDAEFLTKNDALAADRIIGVETGGCPHTAIREDASMNLAAIDELQARHNDLDFVLVESGGDNLSATFSPELSDLTIYVIDVSAGDKIPRKGGPGITKSDLLIINKIDVANLVGASLEVMDADTKKMRGDKPFIFSNMKTQQGLADIISFIEKEGMLSL.

Residue 12-19 (GPVGSGKT) participates in GTP binding.

Belongs to the SIMIBI class G3E GTPase family. UreG subfamily. As to quaternary structure, homodimer. UreD, UreF and UreG form a complex that acts as a GTP-hydrolysis-dependent molecular chaperone, activating the urease apoprotein by helping to assemble the nickel containing metallocenter of UreC. The UreE protein probably delivers the nickel.

It is found in the cytoplasm. In terms of biological role, facilitates the functional incorporation of the urease nickel metallocenter. This process requires GTP hydrolysis, probably effectuated by UreG. The sequence is that of Urease accessory protein UreG from Alteromonas mediterranea (strain DSM 17117 / CIP 110805 / LMG 28347 / Deep ecotype).